We begin with the raw amino-acid sequence, 281 residues long: Glycerol uptake facilitator protein (281 aa).

Over 1–5 the chain is Cytoplasmic; sequence MSQTS. Residues 6-34 form a helical membrane-spanning segment; the sequence is TLKGQCIAEFLGTGLLIFFGVGCVAALKV. Topologically, residues 35–39 are periplasmic; that stretch reads AGASF. A helical membrane pass occupies residues 40–60; that stretch reads GQWEISVIWGLGVAMAIYLTA. The Cytoplasmic segment spans residues 61–63; sequence GVS. An intramembrane segment occupies 64 to 67; the sequence is GAHL. An NPA 1 motif is present at residues 68–70; that stretch reads NPA. The helical intramembrane region spans 68-78; sequence NPAVTIALWLF. Residues 79-84 lie on the Cytoplasmic side of the membrane; sequence ACFDKR. A helical membrane pass occupies residues 85–108; that stretch reads KVIPFIVSQVAGAFCAAALVYGLY. Over 109–143 the chain is Periplasmic; sequence YNLFFDFEQTHHIVRGSVESVDLAGTFSTYPNPHI. Residues 144–169 form a helical membrane-spanning segment; that stretch reads NFVQAFAVEMVITAILMGLILALTDD. Residues 170 to 177 lie on the Cytoplasmic side of the membrane; sequence GNGVPRGP. A helical membrane pass occupies residues 178–194; the sequence is LAPLLIGLLIAVIGASM. Residues 195-198 lie on the Periplasmic side of the membrane; it reads GPLT. An intramembrane segment occupies 199–202; the sequence is GFAM. The NPA 2 signature appears at 203 to 205; the sequence is NPA. Positions 203–216 form an intramembrane region, helical; it reads NPARDFGPKVFAWL. Residues 217–231 lie on the Periplasmic side of the membrane; it reads AGWGNVAFTGGRDIP. The chain crosses the membrane as a helical span at residues 232–254; it reads YFLVPLFSPIVGAIVGAFAYRKL. The Cytoplasmic portion of the chain corresponds to 255–281; the sequence is IGRHLPCDICVVEEKETTTPSEQKASL.

This sequence belongs to the MIP/aquaporin (TC 1.A.8) family. Homotetramer.

The protein resides in the cell inner membrane. It catalyses the reaction glycerol(in) = glycerol(out). Mediates glycerol diffusion across the cytoplasmic membrane via a pore-type mechanism. In Shigella flexneri, this protein is Glycerol uptake facilitator protein (glpF).